The chain runs to 299 residues: uncharacterized protein (299 aa).

A disordered region spans residues 1 to 20; that stretch reads MTTKHELVINTNEPSAPNAD. A helical transmembrane segment spans residues 172–192; the sequence is SFFIPPMVVISTPICLGLTVF.

Belongs to the IIV-6 259R family.

Its subcellular location is the membrane. This is an uncharacterized protein from Acheta domesticus (House cricket).